Here is a 242-residue protein sequence, read N- to C-terminus: 6-phosphogluconolactonase (242 aa).

Belongs to the glucosamine/galactosamine-6-phosphate isomerase family. 6-phosphogluconolactonase subfamily.

The enzyme catalyses 6-phospho-D-glucono-1,5-lactone + H2O = 6-phospho-D-gluconate + H(+). It participates in carbohydrate degradation; pentose phosphate pathway; D-ribulose 5-phosphate from D-glucose 6-phosphate (oxidative stage): step 2/3. Its function is as follows. Hydrolysis of 6-phosphogluconolactone to 6-phosphogluconate. The chain is 6-phosphogluconolactonase (pgl) from Pseudomonas putida (Arthrobacter siderocapsulatus).